The chain runs to 1187 residues: DNA excision repair protein CSB (1187 aa).

Residues 31–43 (QATTDPADSSGPT) are compositionally biased toward polar residues. 4 disordered regions span residues 31-53 (QATT…PDDA), 75-102 (IKGA…HHGA), 217-242 (KRVE…MEAS), and 265-351 (DSES…EGSD). 2 stretches are compositionally biased toward basic and acidic residues: residues 92 to 101 (KGKDQPDHHG) and 217 to 230 (KRVE…RQDD). The segment covering 300–319 (KRPRNKTKRPLPGKKWRKAN) has biased composition (basic residues). Residues 339–351 (SDDDEDQVTEGSD) are compositionally biased toward acidic residues. In terms of domain architecture, Helicase ATP-binding spans 384–580 (WELHCQRAGG…WSLFDFVFPG (197 aa)). ATP is bound at residue 397-404 (DEMGLGKT). Positions 457–480 (SSSKKSKRSSDSDSEASWDSDQEE) are disordered. Over residues 468–480 (SDSEASWDSDQEE) the composition is skewed to acidic residues. A DEGH box motif is present at residues 531 to 534 (DEGH). The Helicase C-terminal domain maps to 716 to 876 (KVVEQVLKVW…RRFFKARDMK (161 aa)). 2 disordered regions span residues 916–945 (LYAA…HCPD) and 1095–1116 (GSAS…SSTR). The segment covering 918 to 933 (AASATPTTSGTEPSSS) has biased composition (low complexity).

It belongs to the SNF2/RAD54 helicase family. In terms of assembly, homodimer. Binds DNA. Expressed in proliferating tissues. Highly expressed in shoot apical meristem (SAM). Expressed in roots, young leaves, flag leaves, and panicles. Expressed at very low levels in mature leaves.

It is found in the nucleus. Functionally, essential factor involved in transcription-coupled nucleotide excision repair (TCR) which allows RNA polymerase II-blocking lesions to be rapidly removed from the transcribed strand of active genes. Upon DNA-binding, it locally modifies DNA conformation by wrapping the DNA around itself, thereby modifying the interface between stalled RNA polymerase II and DNA. It is required for transcription-coupled repair complex formation. This is DNA excision repair protein CSB from Oryza sativa subsp. japonica (Rice).